Consider the following 265-residue polypeptide: Tryptophan synthase alpha chain (265 aa).

Catalysis depends on proton acceptor residues Glu-48 and Asp-59.

The protein belongs to the TrpA family. As to quaternary structure, tetramer of two alpha and two beta chains.

The enzyme catalyses (1S,2R)-1-C-(indol-3-yl)glycerol 3-phosphate + L-serine = D-glyceraldehyde 3-phosphate + L-tryptophan + H2O. It participates in amino-acid biosynthesis; L-tryptophan biosynthesis; L-tryptophan from chorismate: step 5/5. Functionally, the alpha subunit is responsible for the aldol cleavage of indoleglycerol phosphate to indole and glyceraldehyde 3-phosphate. This Pelagibacter ubique (strain HTCC1062) protein is Tryptophan synthase alpha chain.